A 337-amino-acid chain; its full sequence is MANRGGRHARNEESDNTINYVQCDGLAVMKMVKHCHEESSNMDLAQGALLGLVVDKCLEITNCFPFPKSGDETMDEEMYQLTVMRRLRRVNVDHLHVGWYQSSDVGNSLSLALLESQYHYQTSIEESVVVVYDTQKSSRGFLCLKAYRLTPQAIQMYKDGDFTPEAFRTLKVGYESLFAEIPIVIKNSPLTNIMMSELNELLPEDKGHNFLDLGTASVLENHMRSLIERVDELYQEAVRYNKYQQVVFKQDTEKHRALAKLAAENAVRTSKGEPTVPEEEVIKQFRPMPVPARLTATITSGQINTHAQHIAQFCSQSLAKLFITESLQNAKEAKETK.

Residues 21–153 enclose the MPN domain; sequence VQCDGLAVMK…LKAYRLTPQA (133 aa).

This sequence belongs to the eIF-3 subunit H family. As to quaternary structure, component of the eukaryotic translation initiation factor 3 (eIF-3) complex. The eIF-3 complex interacts with pix. Interacts with mxt.

Its subcellular location is the cytoplasm. Component of the eukaryotic translation initiation factor 3 (eIF-3) complex, which is involved in protein synthesis of a specialized repertoire of mRNAs and, together with other initiation factors, stimulates binding of mRNA and methionyl-tRNAi to the 40S ribosome. The eIF-3 complex specifically targets and initiates translation of a subset of mRNAs involved in cell proliferation. The sequence is that of Eukaryotic translation initiation factor 3 subunit H from Drosophila ananassae (Fruit fly).